Here is a 101-residue protein sequence, read N- to C-terminus: Small ribosomal subunit protein uS14 (101 aa).

This sequence belongs to the universal ribosomal protein uS14 family. In terms of assembly, part of the 30S ribosomal subunit. Contacts proteins S3 and S10.

Binds 16S rRNA, required for the assembly of 30S particles and may also be responsible for determining the conformation of the 16S rRNA at the A site. The protein is Small ribosomal subunit protein uS14 of Bartonella henselae (strain ATCC 49882 / DSM 28221 / CCUG 30454 / Houston 1) (Rochalimaea henselae).